We begin with the raw amino-acid sequence, 67 residues long: Protein SlyX homolog (67 aa).

Over residues 48–60 the composition is skewed to polar residues; sequence TSAPSTAAESNPQ. Residues 48–67 are disordered; it reads TSAPSTAAESNPQHEIPPHY.

It belongs to the SlyX family.

The polypeptide is Protein SlyX homolog (Cupriavidus pinatubonensis (strain JMP 134 / LMG 1197) (Cupriavidus necator (strain JMP 134))).